Here is a 227-residue protein sequence, read N- to C-terminus: Cytochrome c oxidase subunit 2 (227 aa).

Over 1–14 (MAHAAQVGLQDATS) the chain is Mitochondrial intermembrane. Residues 15 to 45 (PIMEELITFHDHALMIIFLICFLVLYALFLT) traverse the membrane as a helical segment. Over 46-59 (LTTKLTNTNISDAQ) the chain is Mitochondrial matrix. A helical transmembrane segment spans residues 60 to 87 (EMETVWTILPAIILVLIALPSLRILYMT). Topologically, residues 88 to 227 (DEVNDPSLTI…IFEMGPVFTL (140 aa)) are mitochondrial intermembrane. The Cu cation site is built by His161, Cys196, Glu198, Cys200, His204, and Met207. Residue Glu198 coordinates Mg(2+).

The protein belongs to the cytochrome c oxidase subunit 2 family. In terms of assembly, component of the cytochrome c oxidase (complex IV, CIV), a multisubunit enzyme composed of 14 subunits. The complex is composed of a catalytic core of 3 subunits MT-CO1, MT-CO2 and MT-CO3, encoded in the mitochondrial DNA, and 11 supernumerary subunits COX4I1 (or COX4I2), COX5A, COX5B, COX6A1 (or COX6A2), COX6B1 (or COX6B2), COX6C, COX7A2 (or COX7A1), COX7B, COX7C, COX8A and NDUFA4, which are encoded in the nuclear genome. The complex exists as a monomer or a dimer and forms supercomplexes (SCs) in the inner mitochondrial membrane with NADH-ubiquinone oxidoreductase (complex I, CI) and ubiquinol-cytochrome c oxidoreductase (cytochrome b-c1 complex, complex III, CIII), resulting in different assemblies (supercomplex SCI(1)III(2)IV(1) and megacomplex MCI(2)III(2)IV(2)). Found in a complex with TMEM177, COA6, COX18, COX20, SCO1 and SCO2. Interacts with TMEM177 in a COX20-dependent manner. Interacts with COX20. Interacts with COX16. It depends on Cu cation as a cofactor.

The protein resides in the mitochondrion inner membrane. It catalyses the reaction 4 Fe(II)-[cytochrome c] + O2 + 8 H(+)(in) = 4 Fe(III)-[cytochrome c] + 2 H2O + 4 H(+)(out). Functionally, component of the cytochrome c oxidase, the last enzyme in the mitochondrial electron transport chain which drives oxidative phosphorylation. The respiratory chain contains 3 multisubunit complexes succinate dehydrogenase (complex II, CII), ubiquinol-cytochrome c oxidoreductase (cytochrome b-c1 complex, complex III, CIII) and cytochrome c oxidase (complex IV, CIV), that cooperate to transfer electrons derived from NADH and succinate to molecular oxygen, creating an electrochemical gradient over the inner membrane that drives transmembrane transport and the ATP synthase. Cytochrome c oxidase is the component of the respiratory chain that catalyzes the reduction of oxygen to water. Electrons originating from reduced cytochrome c in the intermembrane space (IMS) are transferred via the dinuclear copper A center (CU(A)) of subunit 2 and heme A of subunit 1 to the active site in subunit 1, a binuclear center (BNC) formed by heme A3 and copper B (CU(B)). The BNC reduces molecular oxygen to 2 water molecules using 4 electrons from cytochrome c in the IMS and 4 protons from the mitochondrial matrix. The polypeptide is Cytochrome c oxidase subunit 2 (MT-CO2) (Homo sapiens (Human)).